An 89-amino-acid polypeptide reads, in one-letter code: Small ribosomal subunit protein uS15 (89 aa).

This sequence belongs to the universal ribosomal protein uS15 family. As to quaternary structure, part of the 30S ribosomal subunit. Forms a bridge to the 50S subunit in the 70S ribosome, contacting the 23S rRNA.

Functionally, one of the primary rRNA binding proteins, it binds directly to 16S rRNA where it helps nucleate assembly of the platform of the 30S subunit by binding and bridging several RNA helices of the 16S rRNA. Its function is as follows. Forms an intersubunit bridge (bridge B4) with the 23S rRNA of the 50S subunit in the ribosome. The chain is Small ribosomal subunit protein uS15 from Hamiltonella defensa subsp. Acyrthosiphon pisum (strain 5AT).